A 421-amino-acid polypeptide reads, in one-letter code: Serine--tRNA ligase (421 aa).

229-231 (TAE) contacts L-serine. 260 to 262 (RAE) contacts ATP. Residue Glu-283 participates in L-serine binding. Residue 347-350 (EISS) coordinates ATP. Ser-383 is an L-serine binding site.

Belongs to the class-II aminoacyl-tRNA synthetase family. Type-1 seryl-tRNA synthetase subfamily. As to quaternary structure, homodimer. The tRNA molecule binds across the dimer.

It is found in the cytoplasm. The catalysed reaction is tRNA(Ser) + L-serine + ATP = L-seryl-tRNA(Ser) + AMP + diphosphate + H(+). It carries out the reaction tRNA(Sec) + L-serine + ATP = L-seryl-tRNA(Sec) + AMP + diphosphate + H(+). The protein operates within aminoacyl-tRNA biosynthesis; selenocysteinyl-tRNA(Sec) biosynthesis; L-seryl-tRNA(Sec) from L-serine and tRNA(Sec): step 1/1. Catalyzes the attachment of serine to tRNA(Ser). Is also able to aminoacylate tRNA(Sec) with serine, to form the misacylated tRNA L-seryl-tRNA(Sec), which will be further converted into selenocysteinyl-tRNA(Sec). The protein is Serine--tRNA ligase of Desulfitobacterium hafniense (strain Y51).